A 616-amino-acid polypeptide reads, in one-letter code: Chaperone protein HscA (616 aa).

Belongs to the heat shock protein 70 family.

Functionally, chaperone involved in the maturation of iron-sulfur cluster-containing proteins. Has a low intrinsic ATPase activity which is markedly stimulated by HscB. Involved in the maturation of IscU. The polypeptide is Chaperone protein HscA (Salmonella paratyphi A (strain ATCC 9150 / SARB42)).